Reading from the N-terminus, the 151-residue chain is Large ribosomal subunit protein bL9 (151 aa).

This sequence belongs to the bacterial ribosomal protein bL9 family.

Functionally, binds to the 23S rRNA. The protein is Large ribosomal subunit protein bL9 of Francisella philomiragia subsp. philomiragia (strain ATCC 25017 / CCUG 19701 / FSC 153 / O#319-036).